Reading from the N-terminus, the 507-residue chain is Glycine, alanine and asparagine-rich protein (507 aa).

A signal peptide spans 1–17 (MLRVPLLVLCLALSVGA). A coiled-coil region spans residues 158 to 185 (SAQALASATAELQAAQDAYDQASAYAEA). Residues 462-498 (GNGNGGNGRNGNGGNGRNGNGGNGGNGNGRNGRGGRY) are compositionally biased toward gly residues. The disordered stretch occupies residues 462–507 (GNGNGGNGRNGNGGNGRNGNGGNGGNGNGRNGRGGRYYYGSSDYYY).

As to expression, component of the acid-soluble and acid-insoluble organic matrix of calcified shell layers (at protein level).

It is found in the secreted. This chain is Glycine, alanine and asparagine-rich protein, found in Haliotis asinina (Donkey's ear abalone).